The primary structure comprises 208 residues: Uracil phosphoribosyltransferase (208 aa).

Residues Arg-78, Arg-103, and 130-138 (DPMLATGGS) contribute to the 5-phospho-alpha-D-ribose 1-diphosphate site. Uracil is bound by residues Ile-193 and 198–200 (GDA). Asp-199 is a 5-phospho-alpha-D-ribose 1-diphosphate binding site.

Belongs to the UPRTase family. Requires Mg(2+) as cofactor.

The enzyme catalyses UMP + diphosphate = 5-phospho-alpha-D-ribose 1-diphosphate + uracil. Its pathway is pyrimidine metabolism; UMP biosynthesis via salvage pathway; UMP from uracil: step 1/1. Its activity is regulated as follows. Allosterically activated by GTP. In terms of biological role, catalyzes the conversion of uracil and 5-phospho-alpha-D-ribose 1-diphosphate (PRPP) to UMP and diphosphate. The sequence is that of Uracil phosphoribosyltransferase from Photorhabdus laumondii subsp. laumondii (strain DSM 15139 / CIP 105565 / TT01) (Photorhabdus luminescens subsp. laumondii).